Reading from the N-terminus, the 142-residue chain is Large ribosomal subunit protein uL13 (142 aa).

It belongs to the universal ribosomal protein uL13 family. As to quaternary structure, part of the 50S ribosomal subunit.

This protein is one of the early assembly proteins of the 50S ribosomal subunit, although it is not seen to bind rRNA by itself. It is important during the early stages of 50S assembly. This Pyrococcus horikoshii (strain ATCC 700860 / DSM 12428 / JCM 9974 / NBRC 100139 / OT-3) protein is Large ribosomal subunit protein uL13.